The sequence spans 98 residues: UPF0235 protein azo3464 (98 aa).

It belongs to the UPF0235 family.

The sequence is that of UPF0235 protein azo3464 from Azoarcus sp. (strain BH72).